The primary structure comprises 317 residues: Acetyl-coenzyme A carboxylase carboxyl transferase subunit alpha (317 aa).

In terms of domain architecture, CoA carboxyltransferase C-terminal spans R31–S292.

It belongs to the AccA family. In terms of assembly, acetyl-CoA carboxylase is a heterohexamer composed of biotin carboxyl carrier protein (AccB), biotin carboxylase (AccC) and two subunits each of ACCase subunit alpha (AccA) and ACCase subunit beta (AccD).

The protein resides in the cytoplasm. It catalyses the reaction N(6)-carboxybiotinyl-L-lysyl-[protein] + acetyl-CoA = N(6)-biotinyl-L-lysyl-[protein] + malonyl-CoA. The protein operates within lipid metabolism; malonyl-CoA biosynthesis; malonyl-CoA from acetyl-CoA: step 1/1. Its function is as follows. Component of the acetyl coenzyme A carboxylase (ACC) complex. First, biotin carboxylase catalyzes the carboxylation of biotin on its carrier protein (BCCP) and then the CO(2) group is transferred by the carboxyltransferase to acetyl-CoA to form malonyl-CoA. The sequence is that of Acetyl-coenzyme A carboxylase carboxyl transferase subunit alpha from Sorangium cellulosum (strain So ce56) (Polyangium cellulosum (strain So ce56)).